The primary structure comprises 676 residues: Ribosome quality control complex subunit TCF25 (676 aa).

Disordered stretches follow at residues 1–59 (MSRR…VRVN) and 85–147 (LTDA…ENGL). The span at 123-136 (GKLRKKKKKQKNKK) shows a compositional bias: basic residues. Position 602 is a phosphoserine (S602).

This sequence belongs to the TCF25 family. As to quaternary structure, component of the ribosome quality control complex (RQC), composed of the E3 ubiquitin ligase LTN1, TCF25 and NEMF associated with the 60S ribosomal subunit. Interacts (via C-terminus) with NFATC4; the interaction leads to suppresson of NFATC4 transcription factor activity and is reduced following stimulation with angiotensin-2. Interacts with XIAP. In terms of tissue distribution, in the embryo, widely expressed with highest levels in brain. In the adult, highest expression is found in the heart. Repressed in cardiac tissue of patients with heart failure (at protein level). mRNA levels in the heart are unchanged in patients with heart failure.

The protein localises to the nucleus. It localises to the cytoplasm. Its subcellular location is the cytosol. Its function is as follows. Component of the ribosome quality control complex (RQC), a ribosome-associated complex that mediates ubiquitination and extraction of incompletely synthesized nascent chains for proteasomal degradation. In the RQC complex, required to promote formation of 'Lys-48'-linked polyubiquitin chains during ubiquitination of incompletely synthesized proteins by LTN1. May negatively regulate the calcineurin-NFAT signaling cascade by suppressing the activity of transcription factor NFATC4. May play a role in cell death control. The chain is Ribosome quality control complex subunit TCF25 from Homo sapiens (Human).